Reading from the N-terminus, the 332-residue chain is Adenosine receptor A2b (332 aa).

The Extracellular portion of the chain corresponds to 1–8; that stretch reads MQLETQDA. A helical transmembrane segment spans residues 9–33; it reads LYVALELAIAALSVAGNVLVCAAVG. The Cytoplasmic segment spans residues 34-43; it reads TSSALQTPTN. A helical membrane pass occupies residues 44 to 67; that stretch reads YFLVSLAAADVAVGLFAIPFAITI. Over 68–78 the chain is Extracellular; that stretch reads SLGFCTDFHSC. Cysteine 78 and cysteine 170 form a disulfide bridge. The chain crosses the membrane as a helical span at residues 79–101; sequence LFLACFVLVLTQSSIFSLLAVAV. Topologically, residues 102–121 are cytoplasmic; it reads DRYLAIRVPLRYKSLVTGTR. Residues 122-144 traverse the membrane as a helical segment; that stretch reads ARGVIAVLWVLAFGIGLTPFLGW. The Extracellular portion of the chain corresponds to 145–177; sequence NSKDSATNCTEPWDGTTNESCCLVKCLFENVVP. N-linked (GlcNAc...) asparagine glycosylation is found at asparagine 152 and asparagine 162. Glutamate 173 contributes to the adenosine binding site. Residues 178–202 form a helical membrane-spanning segment; the sequence is MSYMVYFNFFGCVLPPLLIMLVIYI. Residues 203-234 lie on the Cytoplasmic side of the membrane; the sequence is KIFMVACKQLQRTELVDHSRTVIQREIHAAKS. The chain crosses the membrane as a helical span at residues 235–258; sequence LAMIVGIFALCWLPVHAINCVTLF. Residue asparagine 253 participates in adenosine binding. At 259–266 the chain is on the extracellular side; sequence QPARAKDK. A helical membrane pass occupies residues 267 to 290; sequence PKWAMNMAILLSHASSVVNPIVYA. Positions 278 and 279 each coordinate adenosine. The Cytoplasmic portion of the chain corresponds to 291-332; it reads YRNRDFRYTFHKIISRYVLCQTDVLKSGNGQAGTQSALDVGL. Residue cysteine 310 is the site of S-palmitoyl cysteine attachment.

It belongs to the G-protein coupled receptor 1 family.

The protein resides in the cell membrane. Receptor for adenosine. The activity of this receptor is mediated by G proteins which activate adenylyl cyclase. The chain is Adenosine receptor A2b (ADORA2B) from Canis lupus familiaris (Dog).